The following is a 524-amino-acid chain: Cytochrome P450 monooxygenase alt1 (524 aa).

A helical membrane pass occupies residues 24–44 (IANMLSVIAFSICISPIVYFL). Cys469 serves as a coordination point for heme.

It belongs to the cytochrome P450 family. Heme is required as a cofactor.

Its subcellular location is the membrane. It functions in the pathway secondary metabolite biosynthesis. Its function is as follows. Cytochrome P450 monooxygenase; part of the gene cluster that mediates the biosynthesis of alternapyrone derivatives. Alternapyrone is a decaketide with octa-methylation from methionine on every C2 unit except the third unit. All the domains in the polyketide synthase alt5 are apparently involved in alternapyrone synthesis, that is, the 8 CMeT, 7 KR, 7 DH, and 4 ER reactions in the 9 KS-mediated condensation steps required for alternapyrone synthesis. the alternapyrone produced by alt5 might be intensively modified by cytochrome P450 monooxygenases alt1, alt2 and alt3 and FAD-dependent oxidoreductase alt4 present in the alt gene cluster. The polypeptide is Cytochrome P450 monooxygenase alt1 (Alternaria solani).